We begin with the raw amino-acid sequence, 480 residues long: Adenosylhomocysteinase (480 aa).

Substrate-binding residues include threonine 63, aspartate 142, and glutamate 203. 204–206 (TTT) is a binding site for NAD(+). Substrate-binding residues include lysine 233 and aspartate 237. NAD(+)-binding positions include asparagine 238, 267 to 272 (GYGDVG), glutamate 290, asparagine 325, 346 to 348 (IGH), and asparagine 394.

The protein belongs to the adenosylhomocysteinase family. It depends on NAD(+) as a cofactor.

It is found in the cytoplasm. The catalysed reaction is S-adenosyl-L-homocysteine + H2O = L-homocysteine + adenosine. It participates in amino-acid biosynthesis; L-homocysteine biosynthesis; L-homocysteine from S-adenosyl-L-homocysteine: step 1/1. In terms of biological role, may play a key role in the regulation of the intracellular concentration of adenosylhomocysteine. This chain is Adenosylhomocysteinase, found in Xylella fastidiosa (strain 9a5c).